Reading from the N-terminus, the 393-residue chain is DNA primase small subunit PriS (393 aa).

Catalysis depends on residues Asp100, Asp102, and Asp296.

The protein belongs to the eukaryotic-type primase small subunit family. In terms of assembly, heterodimer of a small subunit (PriS) and a large subunit (PriL). The cofactor is Mg(2+). Mn(2+) serves as cofactor.

Its function is as follows. Catalytic subunit of DNA primase, an RNA polymerase that catalyzes the synthesis of short RNA molecules used as primers for DNA polymerase during DNA replication. The small subunit contains the primase catalytic core and has DNA synthesis activity on its own. Binding to the large subunit stabilizes and modulates the activity, increasing the rate of DNA synthesis while decreasing the length of the DNA fragments, and conferring RNA synthesis capability. The DNA polymerase activity may enable DNA primase to also catalyze primer extension after primer synthesis. May also play a role in DNA repair. This Natronomonas pharaonis (strain ATCC 35678 / DSM 2160 / CIP 103997 / JCM 8858 / NBRC 14720 / NCIMB 2260 / Gabara) (Halobacterium pharaonis) protein is DNA primase small subunit PriS.